Consider the following 375-residue polypeptide: Tyrosine--tRNA ligase (375 aa).

L-tyrosine contacts are provided by Tyr-37, Tyr-168, Gln-172, Asp-175, and Gln-190. A 'KMSKS' region motif is present at residues 251–255 (KMSKS). An ATP-binding site is contributed by Lys-254.

The protein belongs to the class-I aminoacyl-tRNA synthetase family. TyrS type 4 subfamily. In terms of assembly, homodimer.

The protein localises to the cytoplasm. It catalyses the reaction tRNA(Tyr) + L-tyrosine + ATP = L-tyrosyl-tRNA(Tyr) + AMP + diphosphate + H(+). Its function is as follows. Catalyzes the attachment of tyrosine to tRNA(Tyr) in a two-step reaction: tyrosine is first activated by ATP to form Tyr-AMP and then transferred to the acceptor end of tRNA(Tyr). This is Tyrosine--tRNA ligase from Thermococcus kodakarensis (strain ATCC BAA-918 / JCM 12380 / KOD1) (Pyrococcus kodakaraensis (strain KOD1)).